Here is a 243-residue protein sequence, read N- to C-terminus: E3 ubiquitin-protein ligase RMA3 (243 aa).

The RING-type zinc-finger motif lies at 44 to 92 (CNICLDTAHDPVVTLCGHLFCWPCIYKWLHVQLSSVSVDQHQNNCPVCK). The tract at residues 110–135 (SPSSTFGSKKQDALSTDIPRRPAPSA) is disordered. Residues 223-243 (KSLNRVSIFFLCCIILCLLLF) traverse the membrane as a helical; Anchor for type IV membrane protein segment.

As to expression, ubiquitous. Highly expressed in roots.

It is found in the endoplasmic reticulum membrane. The enzyme catalyses S-ubiquitinyl-[E2 ubiquitin-conjugating enzyme]-L-cysteine + [acceptor protein]-L-lysine = [E2 ubiquitin-conjugating enzyme]-L-cysteine + N(6)-ubiquitinyl-[acceptor protein]-L-lysine.. It functions in the pathway protein modification; protein ubiquitination. E3 ubiquitin-protein ligase. The sequence is that of E3 ubiquitin-protein ligase RMA3 (RMA3) from Arabidopsis thaliana (Mouse-ear cress).